Consider the following 783-residue polypeptide: Tricorn protease-interacting factor F2 (783 aa).

Substrate contacts are provided by residues Glu-107 and 236–240 (GAMEN). His-271 serves as a coordination point for Zn(2+). Glu-272 serves as the catalytic Proton acceptor. 2 residues coordinate Zn(2+): His-275 and Glu-294.

It belongs to the peptidase M1 family. As to quaternary structure, monomer. Part of the Tricorn proteolytic complex. Zn(2+) is required as a cofactor.

The protein localises to the cytoplasm. Its function is as follows. Proteases F1, F2 and F3 degrade oligopeptides produced by Tricorn (themselves probably produced by the proteasome), yielding free amino acids. The polypeptide is Tricorn protease-interacting factor F2 (trf2) (Thermoplasma volcanium (strain ATCC 51530 / DSM 4299 / JCM 9571 / NBRC 15438 / GSS1)).